The following is a 290-amino-acid chain: Arylamine N-acetyltransferase 2 (290 aa).

The active-site Acyl-thioester intermediate is Cys-68. Residues Ser-103 and Gly-104 each coordinate CoA. Position 106–107 (106–107 (IH)) interacts with substrate. Residues His-107 and Asp-122 contribute to the active site. Residue Tyr-208 participates in CoA binding.

The protein belongs to the arylamine N-acetyltransferase family.

It is found in the cytoplasm. It catalyses the reaction an arylamine + acetyl-CoA = an N-acetylarylamine + CoA. It carries out the reaction an N-hydroxyarylamine + acetyl-CoA = an N-acetoxyarylamine + CoA. Its function is as follows. Catalyzes the N- or O-acetylation of various arylamine and heterocyclic amine substrates, and participates in the detoxification of a plethora of hydrazine and arylamine drugs. This chain is Arylamine N-acetyltransferase 2 (NAT2), found in Mesocricetus auratus (Golden hamster).